The chain runs to 664 residues: Putative membrane protein Bcell_0381 (664 aa).

The segment covering 588–616 (DVTQDENGEEKSEEDNKEEIVEENTEEDN) has biased composition (acidic residues). The tract at residues 588-622 (DVTQDENGEEKSEEDNKEEIVEENTEEDNKEEKTI) is disordered. The chain crosses the membrane as a helical span at residues 636-656 (YQFLLAGIIMLVGGSCIYVFY).

It is found in the cell membrane. This chain is Putative membrane protein Bcell_0381, found in Evansella cellulosilytica (strain ATCC 21833 / DSM 2522 / FERM P-1141 / JCM 9156 / N-4) (Bacillus cellulosilyticus).